Consider the following 317-residue polypeptide: Transaldolase 1 (317 aa).

Lys132 serves as the catalytic Schiff-base intermediate with substrate.

Belongs to the transaldolase family. Type 1 subfamily. Homodimer.

It is found in the cytoplasm. It carries out the reaction D-sedoheptulose 7-phosphate + D-glyceraldehyde 3-phosphate = D-erythrose 4-phosphate + beta-D-fructose 6-phosphate. The protein operates within carbohydrate degradation; pentose phosphate pathway; D-glyceraldehyde 3-phosphate and beta-D-fructose 6-phosphate from D-ribose 5-phosphate and D-xylulose 5-phosphate (non-oxidative stage): step 2/3. Functionally, transaldolase is important for the balance of metabolites in the pentose-phosphate pathway. The chain is Transaldolase 1 from Shigella sonnei (strain Ss046).